The primary structure comprises 118 residues: Large ribosomal subunit protein uL24 (118 aa).

Belongs to the universal ribosomal protein uL24 family. In terms of assembly, part of the 50S ribosomal subunit.

Functionally, one of two assembly initiator proteins, it binds directly to the 5'-end of the 23S rRNA, where it nucleates assembly of the 50S subunit. One of the proteins that surrounds the polypeptide exit tunnel on the outside of the subunit. This chain is Large ribosomal subunit protein uL24, found in Prochlorococcus marinus (strain NATL2A).